Here is a 141-residue protein sequence, read N- to C-terminus: Large ribosomal subunit protein uL11 (141 aa).

The protein belongs to the universal ribosomal protein uL11 family. In terms of assembly, part of the ribosomal stalk of the 50S ribosomal subunit. Interacts with L10 and the large rRNA to form the base of the stalk. L10 forms an elongated spine to which L12 dimers bind in a sequential fashion forming a multimeric L10(L12)X complex. One or more lysine residues are methylated.

In terms of biological role, forms part of the ribosomal stalk which helps the ribosome interact with GTP-bound translation factors. The protein is Large ribosomal subunit protein uL11 of Chloroflexus aggregans (strain MD-66 / DSM 9485).